We begin with the raw amino-acid sequence, 124 residues long: Holo-[acyl-carrier-protein] synthase (124 aa).

Aspartate 8 and glutamate 56 together coordinate Mg(2+).

Belongs to the P-Pant transferase superfamily. AcpS family. It depends on Mg(2+) as a cofactor.

It is found in the cytoplasm. The catalysed reaction is apo-[ACP] + CoA = holo-[ACP] + adenosine 3',5'-bisphosphate + H(+). Its function is as follows. Transfers the 4'-phosphopantetheine moiety from coenzyme A to a Ser of acyl-carrier-protein. The sequence is that of Holo-[acyl-carrier-protein] synthase from Nitratidesulfovibrio vulgaris (strain ATCC 29579 / DSM 644 / CCUG 34227 / NCIMB 8303 / VKM B-1760 / Hildenborough) (Desulfovibrio vulgaris).